Consider the following 110-residue polypeptide: MAKHHPDLIFCRKQAGVAIGRLCEKCDGKCVICDSYVRPCTLVRICDECNYGSYQGRCVICGGPGVSDAYYCKECTIQEKDRDGCPKIVNLGSSKTDLFYERKKYGFKKR.

Ala-2 carries the N-acetylalanine modification. The residue at position 3 (Lys-3) is an N6-acetyllysine. Residues Cys-11, Cys-23, Cys-26, Cys-30, Cys-33, Cys-46, Cys-49, Cys-58, Cys-61, Cys-72, and Cys-75 each contribute to the Zn(2+) site. Residues 35–51 are interaction with SF3B1 and SF3B3; it reads SYVRPCTLVRICDECNY. The interval 79–82 is interaction with SF3B3; it reads EKDR. Cys-85 contacts Zn(2+). Ser-94 bears the Phosphoserine mark.

It belongs to the PHF5 family. In terms of assembly, component of the 17S U2 SnRNP complex, a ribonucleoprotein complex that contains small nuclear RNA (snRNA) U2 and a number of specific proteins. Part of the SF3B subcomplex of the 17S U2 SnRNP complex. SF3B associates with the splicing subcomplex SF3A and a 12S RNA unit to form the U2 small nuclear ribonucleoproteins complex (U2 snRNP). Within the SF3B complex interacts directly with SF3B1 and SF3B3. Component of the minor spliceosome, which splices U12-type introns. Within this complex, interacts with CRIPT. Interacts (via N-terminus) with U2AF1 and SRSF5; acts to bridge the two. Interacts (via C-terminus) with EP400 and DDX1; acts to bridge the two. Interacts with the PAF1 complex (PAF1C) composed of CDC73, PAF1, LEO1, CTR9, RTF1 and SKIC8. Within the PAF1C interacts directly with CDC73 and SKIC8. Interacts with RNA polymerase II. As to expression, expressed in primary spermatocytes (at protein level). Ubiquitously expressed in pre- and postnatal tissues. Highly expressed in pluripotent embryonic stem cells (ESCs) (at protein level) and induced pluripotent stem cells (iPSCs).

The protein resides in the nucleus. It is found in the nucleus speckle. Component of the 17S U2 SnRNP complex of the spliceosome, a large ribonucleoprotein complex that removes introns from transcribed pre-mRNAs. The 17S U2 SnRNP complex (1) directly participates in early spliceosome assembly and (2) mediates recognition of the intron branch site during pre-mRNA splicing by promoting the selection of the pre-mRNA branch-site adenosine, the nucleophile for the first step of splicing. Within the 17S U2 SnRNP complex, PHF5A is part of the SF3B subcomplex, which is required for 'A' complex assembly formed by the stable binding of U2 snRNP to the branchpoint sequence in pre-mRNA. Sequence independent binding of SF3A and SF3B subcomplexes upstream of the branch site is essential, it may anchor U2 snRNP to the pre-mRNA. Also acts as a component of the minor spliceosome, which is involved in the splicing of U12-type introns in pre-mRNAs. Also involved in elongation by RNA polymerase II as part of the PAF1 complex (PAF1C). PAF1C is required for maintenance of embryonic stem cell (ESC) self-renewal and cellular reprogramming of stem cells. Maintains pluripotency by recruiting and stabilizing PAF1C on pluripotency genes loci, and by regulating the expression of the pluripotency genes. Regulates the deposition of elongation-associated histone modifications, including dimethylated histone H3 'Lys-79' (H3K79me2) and trimethylated histone H3 'Lys-36' (H3K36me3), on PAF1C targets, self-renewal and pluripotency genes. Regulates RNA polymerase II promoter-proximal pause release of the PAF1C targets and self-renewal genes, and the levels of elongating ('Ser-2' phosphorylated) RNA polymerase II in their gene bodies. Regulates muscle specification in adult stem cells by stabilizing PAF1C in chromatin to promote myogenic differentiation. Acts as a transcriptional regulator by binding to the GJA1/Cx43 promoter and enhancing its up-regulation by ESR1/ER-alpha. This Mus musculus (Mouse) protein is PHD finger-like domain-containing protein 5A (Phf5a).